The primary structure comprises 191 residues: Small ribosomal subunit protein uS9c (191 aa).

Residues 166–191 (TQDSRVKERRKYGLKKARKASQYHKR) are disordered. Positions 172-191 (KERRKYGLKKARKASQYHKR) are enriched in basic residues.

The protein belongs to the universal ribosomal protein uS9 family.

Its subcellular location is the plastid. It is found in the chloroplast. The protein is Small ribosomal subunit protein uS9c (rps9) of Chlamydomonas reinhardtii (Chlamydomonas smithii).